A 304-amino-acid polypeptide reads, in one-letter code: Cell surface-binding protein OPG105 (304 aa).

Residues 1-235 enclose the Alpha-carbonic anhydrase domain; sequence MPQQLSPINI…NDDTQVYYSG (235 aa). Residues 1-275 are Virion surface-facing; that stretch reads MPQQLSPINI…YQKYIEGNKT (275 aa). Residues 276-294 traverse the membrane as a helical segment; that stretch reads FAIIAIVFVFILTAILFFM. Residues 295 to 304 lie on the Intravirion side of the membrane; sequence SQRYSREKQN.

It belongs to the alpha-carbonic anhydrase family. In terms of assembly, homodimer; disulfide-linked. In terms of processing, apparently non-glycosylated.

It is found in the virion membrane. Its function is as follows. Binds to chondroitin sulfate on the cell surface to provide virion attachment to target cell. The sequence is that of Cell surface-binding protein OPG105 (OPG105) from Vaccinia virus (strain Ankara) (VACV).